The sequence spans 952 residues: Aminopeptidase 2, mitochondrial (952 aa).

The transit peptide at 1-52 (MPIVRWLLLKSAVRGSSLIGKAHPCLRSIAAHPRYLSNVYSPPAGVSRSLRI) directs the protein to the mitochondrion. Substrate-binding positions include glutamate 228 and 360–364 (GAMEN). An N-linked (GlcNAc...) asparagine glycan is attached at asparagine 381. Histidine 396 serves as a coordination point for Zn(2+). The active-site Proton acceptor is glutamate 397. Positions 400 and 419 each coordinate Zn(2+). Asparagine 713 is a glycosylation site (N-linked (GlcNAc...) asparagine).

This sequence belongs to the peptidase M1 family. Zn(2+) is required as a cofactor.

The protein resides in the periplasm. It localises to the cytoplasm. The protein localises to the mitochondrion. Involved in the cellular supply of leucine from externally offered leucine-containing dipeptide substrates. The sequence is that of Aminopeptidase 2, mitochondrial (APE2) from Saccharomyces cerevisiae (strain ATCC 204508 / S288c) (Baker's yeast).